Here is a 601-residue protein sequence, read N- to C-terminus: MPNSLAGDQVPNPTLDAIGLVDWSLRNAGTSGSTPGLEEGGTDPWTFSQLKNTDQLKEVGTASKLHQVVSGFLKACGLLGSLYFFICSLDILSSAFQLLGSKMAGDIFKDNVVLSNPVAGLVIGVVVTVLVQSSSTSSSIVVSMVASKSLTVQASVPIIMGVNVGTSITSTLVSMAQSGDRDEFQRAFGGSAVHGIFNWLTVLVLLPLENATAALERLSELALGAASLQPGGQAPDILKALTRPFTHLIIQLDSSVVTSSITSNTTNSSLIKHWCGFRGETPQGSSEECDLSGSCTERNSSASPGEDRLLCHHLFAGSELTDLAVGFILLAGSLLVLCVCLVLIVKLLNSVLRGRIAQAVKTVINADFPFPFGWLSGYLAILVGAGLTFLLQSSSVFTAAIVPLMGVGVINLERAYPLFLGSNIGTTTTALLAALASPADTLLFAVQVALIHFFFNLAGILLWYLVPVLRLPIPLAKRFGDLTAQYRWVAIVYLLLTFLLLPLAAFGLSLAGGSVLAAVGGPLVGLVLLIILVNVLQRHRPSWLPRRLQSWAWLPLWLHSLEPWDRLVTGCCPFKAYSNSHMTSKVAHCYENPQVIASQQL.

At 1-75 the chain is on the cytoplasmic side; that stretch reads MPNSLAGDQV…HQVVSGFLKA (75 aa). Position 4 is a phosphoserine (Ser4). The chain crosses the membrane as a helical span at residues 76–96; the sequence is CGLLGSLYFFICSLDILSSAF. Residues 97 to 110 are Extracellular-facing; the sequence is QLLGSKMAGDIFKD. Residues 111–131 form a helical membrane-spanning segment; the sequence is NVVLSNPVAGLVIGVVVTVLV. The Cytoplasmic segment spans residues 132–187; sequence QSSSTSSSIVVSMVASKSLTVQASVPIIMGVNVGTSITSTLVSMAQSGDRDEFQRA. The helical transmembrane segment at 188–208 threads the bilayer; it reads FGGSAVHGIFNWLTVLVLLPL. Over 209-324 the chain is Extracellular; the sequence is ENATAALERL…FAGSELTDLA (116 aa). N-linked (GlcNAc...) asparagine glycosylation is found at Asn210, Asn264, Asn267, and Asn299. The cysteines at positions 275 and 311 are disulfide-linked. Residues 325–345 form a helical membrane-spanning segment; that stretch reads VGFILLAGSLLVLCVCLVLIV. At 346-369 the chain is on the cytoplasmic side; sequence KLLNSVLRGRIAQAVKTVINADFP. Residues 370 to 390 traverse the membrane as a helical segment; it reads FPFGWLSGYLAILVGAGLTFL. The Extracellular portion of the chain corresponds to 391 to 447; that stretch reads LQSSSVFTAAIVPLMGVGVINLERAYPLFLGSNIGTTTTALLAALASPADTLLFAVQ. A helical transmembrane segment spans residues 448 to 468; that stretch reads VALIHFFFNLAGILLWYLVPV. The Cytoplasmic portion of the chain corresponds to 469 to 487; the sequence is LRLPIPLAKRFGDLTAQYR. A helical transmembrane segment spans residues 488–508; that stretch reads WVAIVYLLLTFLLLPLAAFGL. At 509–512 the chain is on the extracellular side; that stretch reads SLAG. The helical transmembrane segment at 513–533 threads the bilayer; the sequence is GSVLAAVGGPLVGLVLLIILV. The Cytoplasmic portion of the chain corresponds to 534-601; it reads NVLQRHRPSW…NPQVIASQQL (68 aa).

This sequence belongs to the SLC34A transporter family. Highly expressed in the kidney. Not found in any of the other tested tissues.

The protein resides in the apical cell membrane. The catalysed reaction is 2 Na(+)(out) + phosphate(out) = 2 Na(+)(in) + phosphate(in). Involved in actively transporting phosphate into cells via Na(+) cotransport in the renal brush border membrane. The cotransport has a Na(+):Pi stoichiometry of 2:1 and is electroneutral. This chain is Sodium-dependent phosphate transport protein 2C (Slc34a3), found in Rattus norvegicus (Rat).